We begin with the raw amino-acid sequence, 618 residues long: Proline--tRNA ligase (618 aa).

This sequence belongs to the class-II aminoacyl-tRNA synthetase family. ProS type 1 subfamily. Homodimer.

Its subcellular location is the cytoplasm. It catalyses the reaction tRNA(Pro) + L-proline + ATP = L-prolyl-tRNA(Pro) + AMP + diphosphate. Its function is as follows. Catalyzes the attachment of proline to tRNA(Pro) in a two-step reaction: proline is first activated by ATP to form Pro-AMP and then transferred to the acceptor end of tRNA(Pro). As ProRS can inadvertently accommodate and process non-cognate amino acids such as alanine and cysteine, to avoid such errors it has two additional distinct editing activities against alanine. One activity is designated as 'pretransfer' editing and involves the tRNA(Pro)-independent hydrolysis of activated Ala-AMP. The other activity is designated 'posttransfer' editing and involves deacylation of mischarged Ala-tRNA(Pro). The misacylated Cys-tRNA(Pro) is not edited by ProRS. This is Proline--tRNA ligase from Streptococcus pyogenes serotype M28 (strain MGAS6180).